The sequence spans 406 residues: MQHNSLIARFAQGNLVLQILVGIILGISLALVSPSSAESVGMLGSLFVGALKAIAPILVFILVAASIANQKKNQHTHMRPIIAMYLAGTFFAALTAVVLSFMFPTTLTLVTGAEGANPPQGILEVIKTLLFKLVDNPVNALMSANYIGILAWGVGLGLALHHASDTTKAVFEDLSHSVSHIVRFIIRLAPFGIFGLVASTFATTGFDALAGYAHLLVVLLSAMAIIALIVNPAMVYVKTKQNPYPLVFQCLRESGVTAFFTRSSAANIPVNMALCEKLKLDEDTYSVSIPLGATINMAGAAITITTLTLAAVHTMGIEVDLMTAILLSVVAAVSACGASGVAGGSLLLIPLACGLFGISNDIAMQVVAVGFIIGVIQDSAETALNSSTDVVFTAAVCESEAQKAKG.

9 consecutive transmembrane segments (helical) span residues 15 to 35 (LVLQ…VSPS), 47 to 67 (FVGA…AASI), 81 to 101 (IIAM…VLSF), 140 to 160 (ALMS…GLAL), 191 to 211 (FGIF…ALAG), 215 to 235 (LLVV…PAMV), 289 to 309 (IPLG…TLTL), 315 to 335 (MGIE…AVSA), and 362 to 382 (IAMQ…SAET).

Belongs to the dicarboxylate/amino acid:cation symporter (DAACS) (TC 2.A.23) family.

The protein resides in the cell inner membrane. The catalysed reaction is L-serine(in) + Na(+)(in) = L-serine(out) + Na(+)(out). The enzyme catalyses L-threonine(in) + Na(+)(in) = L-threonine(out) + Na(+)(out). Involved in the import of serine and threonine into the cell, with the concomitant import of sodium (symport system). The polypeptide is Serine/threonine transporter SstT (Vibrio vulnificus (strain CMCP6)).